We begin with the raw amino-acid sequence, 506 residues long: ATP synthase subunit alpha (506 aa).

170-177 (GDRQTGKT) lines the ATP pocket.

Belongs to the ATPase alpha/beta chains family. F-type ATPases have 2 components, CF(1) - the catalytic core - and CF(0) - the membrane proton channel. CF(1) has five subunits: alpha(3), beta(3), gamma(1), delta(1), epsilon(1). CF(0) has four main subunits: a(1), b(1), b'(1) and c(9-12).

It localises to the cellular thylakoid membrane. The enzyme catalyses ATP + H2O + 4 H(+)(in) = ADP + phosphate + 5 H(+)(out). Functionally, produces ATP from ADP in the presence of a proton gradient across the membrane. The alpha chain is a regulatory subunit. This Synechococcus sp. (strain JA-3-3Ab) (Cyanobacteria bacterium Yellowstone A-Prime) protein is ATP synthase subunit alpha.